An 82-amino-acid chain; its full sequence is ATP synthase subunit c, chloroplastic (82 aa).

2 helical membrane-spanning segments follow: residues 7–27 and 57–77; these read AASVIAAGLAVGLAAIGPGIG and LAFMESLTIYGLVVALSLLFA.

Belongs to the ATPase C chain family. In terms of assembly, F-type ATPases have 2 components, F(1) - the catalytic core - and F(0) - the membrane proton channel. F(1) has five subunits: alpha(3), beta(3), gamma(1), delta(1), epsilon(1). F(0) has four main subunits: a(1), b(1), b'(1) and c(10-14). The alpha and beta chains form an alternating ring which encloses part of the gamma chain. F(1) is attached to F(0) by a central stalk formed by the gamma and epsilon chains, while a peripheral stalk is formed by the delta, b and b' chains.

It localises to the plastid. The protein localises to the chloroplast thylakoid membrane. Its function is as follows. F(1)F(0) ATP synthase produces ATP from ADP in the presence of a proton or sodium gradient. F-type ATPases consist of two structural domains, F(1) containing the extramembraneous catalytic core and F(0) containing the membrane proton channel, linked together by a central stalk and a peripheral stalk. During catalysis, ATP synthesis in the catalytic domain of F(1) is coupled via a rotary mechanism of the central stalk subunits to proton translocation. Key component of the F(0) channel; it plays a direct role in translocation across the membrane. A homomeric c-ring of between 10-14 subunits forms the central stalk rotor element with the F(1) delta and epsilon subunits. In Porphyra purpurea (Red seaweed), this protein is ATP synthase subunit c, chloroplastic.